The chain runs to 1555 residues: Pre-mRNA cleavage complex 2 protein Pcf11 (1555 aa).

N-acetylserine is present on S2. The 129-residue stretch at 14-142 (AREDACRDYQ…ALDVRVNSLD (129 aa)) folds into the CID domain. At S120 the chain carries Phosphoserine; by WNK1. T121 carries the post-translational modification Phosphothreonine; by WNK1. Positions 167–186 (NKSPEEPSTPGTVVSSPSIS) are disordered. Phosphoserine occurs at positions 169 and 182. The span at 174–186 (STPGTVVSSPSIS) shows a compositional bias: low complexity. A coiled-coil region spans residues 202–239 (QLIRQQLLAKQKQLLELQQKKLELELEQAKAQLAVSLS). The interval 266–648 (VKAPHQVPVQ…QQQHRLSVDA (383 aa)) is disordered. K291 is covalently cross-linked (Glycyl lysine isopeptide (Lys-Gly) (interchain with G-Cter in SUMO2)). Residues 307–317 (HGKDQSHRKEF) show a composition bias toward basic and acidic residues. The segment covering 320-333 (NTLNQSDTKTSKTI) has biased composition (polar residues). K328 participates in a covalent cross-link: Glycyl lysine isopeptide (Lys-Gly) (interchain with G-Cter in SUMO2). 3 stretches are compositionally biased toward basic and acidic residues: residues 342–364 (KQEK…DSKS), 380–421 (HTKD…DVKE), and 427–442 (EKKD…EHRL). A Glycyl lysine isopeptide (Lys-Gly) (interchain with G-Cter in SUMO2) cross-link involves residue K456. T459 carries the post-translational modification Phosphothreonine. The span at 475-486 (STRKRSRSRSPK) shows a compositional bias: basic residues. A phosphoserine mark is found at S489, S494, S509, and S511. Positions 494-508 (SPKRRDRRSPKRRQR) are enriched in basic residues. Over residues 529–567 (SHMEEFTPPSREDRNAKRSTKQDIRDPRRMKKTEEERPQ) the composition is skewed to basic and acidic residues. Residues 568–578 (ETTNQHSTKSG) are compositionally biased toward polar residues. Residues 599 to 615 (SGWEENKSLQQVDEHSK) show a composition bias toward basic and acidic residues. S645 bears the Phosphoserine mark. K654 participates in a covalent cross-link: Glycyl lysine isopeptide (Lys-Gly) (interchain with G-Cter in SUMO2). Residue S705 is modified to Phosphoserine. Disordered regions lie at residues 707 to 732 (FNDR…PASR) and 749 to 781 (RPLF…PRID). Positions 716-725 (PRYEDSDKPF) are enriched in basic and acidic residues. K723 participates in a covalent cross-link: Glycyl lysine isopeptide (Lys-Gly) (interchain with G-Cter in SUMO2). Phosphoserine occurs at positions 728 and 777. T785 is modified (phosphothreonine). S794 bears the Phosphoserine mark. Asymmetric dimethylarginine is present on residues R805, R820, and R833. S851 is subject to Phosphoserine. Asymmetric dimethylarginine occurs at positions 929, 942, 955, 981, 994, and 1007. Positions 1056-1081 (HGQPGPRFERTPGQPGPQRFDGPPGQ) are disordered. Asymmetric dimethylarginine is present on residues R1093 and R1104. 2 disordered regions span residues 1127 to 1147 (VSFN…NAPS) and 1159 to 1187 (FDSP…RASG). S1161 carries the post-translational modification Phosphoserine. Residues 1162–1175 (PQGPNFNGPHGPGN) are compositionally biased toward low complexity. A Glycyl lysine isopeptide (Lys-Gly) (interchain with G-Cter in SUMO2) cross-link involves residue K1278. Polar residues predominate over residues 1289–1298 (SATTQVSEVT). Positions 1289–1315 (SATTQVSEVTAQPPPEEEEDQNEDQDV) are disordered. A compositionally biased stretch (acidic residues) spans 1303-1315 (PEEEEDQNEDQDV). Residues K1419, K1511, and K1524 each participate in a glycyl lysine isopeptide (Lys-Gly) (interchain with G-Cter in SUMO2) cross-link. The tract at residues 1516–1555 (EPCDSPKVKEERIDTPPACTEESIATPSEIKTENDTVESV) is disordered. The segment covering 1519–1529 (DSPKVKEERID) has biased composition (basic and acidic residues). Position 1530 is a phosphothreonine (T1530). Residue K1546 forms a Glycyl lysine isopeptide (Lys-Gly) (interchain with G-Cter in SUMO2) linkage.

As to quaternary structure, associates with the phosphorylated CTD domain of POLR2A /RNA polymerase II. Post-translationally, phosphorylation at Ser-120 and/or Thr-121 by WNK1 weakens its association with POLR2A/RNA polymerase II, promoting transcript release from the chromatin template and mRNA export to the cytoplasm.

The protein resides in the nucleus. Its function is as follows. Component of pre-mRNA cleavage complex II, which promotes transcription termination by RNA polymerase II. The sequence is that of Pre-mRNA cleavage complex 2 protein Pcf11 from Homo sapiens (Human).